Reading from the N-terminus, the 346-residue chain is Aldose 1-epimerase (346 aa).

Arg-79 is a binding site for substrate. His-175 (proton donor) is an active-site residue. Asp-245 is a binding site for substrate. Residue Glu-309 is the Proton acceptor of the active site.

This sequence belongs to the aldose epimerase family.

It is found in the cytoplasm. It carries out the reaction alpha-D-glucose = beta-D-glucose. Its pathway is carbohydrate metabolism; hexose metabolism. Functionally, mutarotase converts alpha-aldose to the beta-anomer. It is active on D-glucose, L-arabinose, D-xylose, D-galactose, maltose and lactose. The sequence is that of Aldose 1-epimerase (galM) from Escherichia coli (strain K12).